A 182-amino-acid polypeptide reads, in one-letter code: ATP synthase subunit b, chloroplastic (182 aa).

The helical transmembrane segment at 31-53 (IINISVVLGVLVYFGKGVLSNLL) threads the bilayer.

Belongs to the ATPase B chain family. F-type ATPases have 2 components, F(1) - the catalytic core - and F(0) - the membrane proton channel. F(1) has five subunits: alpha(3), beta(3), gamma(1), delta(1), epsilon(1). F(0) has four main subunits: a(1), b(1), b'(1) and c(10-14). The alpha and beta chains form an alternating ring which encloses part of the gamma chain. F(1) is attached to F(0) by a central stalk formed by the gamma and epsilon chains, while a peripheral stalk is formed by the delta, b and b' chains.

It is found in the plastid. It localises to the chloroplast thylakoid membrane. Functionally, f(1)F(0) ATP synthase produces ATP from ADP in the presence of a proton or sodium gradient. F-type ATPases consist of two structural domains, F(1) containing the extramembraneous catalytic core and F(0) containing the membrane proton channel, linked together by a central stalk and a peripheral stalk. During catalysis, ATP synthesis in the catalytic domain of F(1) is coupled via a rotary mechanism of the central stalk subunits to proton translocation. Component of the F(0) channel, it forms part of the peripheral stalk, linking F(1) to F(0). The protein is ATP synthase subunit b, chloroplastic of Welwitschia mirabilis (Tree tumbo).